Consider the following 466-residue polypeptide: Paraneoplastic antigen Ma3 homolog (466 aa).

The disordered stretch occupies residues 379–408 (RPYQGSRRRRHRRRGQHRKGGVPRDDSQGT). The span at 384-399 (SRRRRHRRRGQHRKGG) shows a compositional bias: basic residues. A CCHC-type zinc finger spans residues 415–432 (TFCYSCGEDGHIRVHCFN). Residues 441–466 (QKRQAAMEKGNRSWAWEKSHPKPKTK) are disordered. Residues 445–460 (AAMEKGNRSWAWEKSH) are compositionally biased toward basic and acidic residues.

This sequence belongs to the PNMA family. In terms of tissue distribution, expressed in the cerebrum and cerebellum.

Its subcellular location is the nucleus. It is found in the nucleolus. This is Paraneoplastic antigen Ma3 homolog (Pnma3) from Mus musculus (Mouse).